We begin with the raw amino-acid sequence, 191 residues long: Small ribosomal subunit protein uS7 (191 aa).

This sequence belongs to the universal ribosomal protein uS7 family. As to quaternary structure, part of the 30S ribosomal subunit.

Its function is as follows. One of the primary rRNA binding proteins, it binds directly to 16S rRNA where it nucleates assembly of the head domain of the 30S subunit. Is located at the subunit interface close to the decoding center. This Methanocaldococcus jannaschii (strain ATCC 43067 / DSM 2661 / JAL-1 / JCM 10045 / NBRC 100440) (Methanococcus jannaschii) protein is Small ribosomal subunit protein uS7.